Here is a 473-residue protein sequence, read N- to C-terminus: 3-isopropylmalate dehydratase large subunit (473 aa).

Residues cysteine 354, cysteine 414, and cysteine 417 each coordinate [4Fe-4S] cluster.

Belongs to the aconitase/IPM isomerase family. LeuC type 1 subfamily. As to quaternary structure, heterodimer of LeuC and LeuD. The cofactor is [4Fe-4S] cluster.

The catalysed reaction is (2R,3S)-3-isopropylmalate = (2S)-2-isopropylmalate. It functions in the pathway amino-acid biosynthesis; L-leucine biosynthesis; L-leucine from 3-methyl-2-oxobutanoate: step 2/4. Its function is as follows. Catalyzes the isomerization between 2-isopropylmalate and 3-isopropylmalate, via the formation of 2-isopropylmaleate. This chain is 3-isopropylmalate dehydratase large subunit, found in Rhodopseudomonas palustris (strain BisB18).